Consider the following 501-residue polypeptide: Prostacyclin synthase (501 aa).

The chain crosses the membrane as a helical span at residues 1–21 (MSWAALLGLLAVLLLLLLLLS). Residues arginine 107, leucine 113, asparagine 288, 359-360 (TR), and arginine 383 contribute to the substrate site. Residue cysteine 442 participates in heme binding.

The protein belongs to the cytochrome P450 family. Heme is required as a cofactor.

The protein localises to the endoplasmic reticulum membrane. It carries out the reaction prostaglandin H2 = prostaglandin I2. The enzyme catalyses a hydroperoxyeicosatetraenoate = an oxoeicosatetraenoate + H2O. It catalyses the reaction (15S)-hydroperoxy-(5Z,8Z,11Z,13E)-eicosatetraenoate = 15-oxo-(5Z,8Z,11Z,13E)-eicosatetraenoate + H2O. The catalysed reaction is (15S)-hydroperoxy-(5Z,8Z,11Z,13E)-eicosatetraenoate + AH2 = (15S)-hydroxy-(5Z,8Z,11Z,13E)-eicosatetraenoate + A + H2O. Functionally, catalyzes the biosynthesis and metabolism of eicosanoids. Catalyzes the isomerization of prostaglandin H2 to prostacyclin (= prostaglandin I2), a potent mediator of vasodilation and inhibitor of platelet aggregation. Additionally, displays dehydratase activity, toward hydroperoxyeicosatetraenoates (HPETEs), especially toward (15S)-hydroperoxy-(5Z,8Z,11Z,13E)-eicosatetraenoate (15(S)-HPETE). The sequence is that of Prostacyclin synthase (Ptgis) from Rattus norvegicus (Rat).